Reading from the N-terminus, the 405-residue chain is Acetate kinase (405 aa).

Asn7 is a Mg(2+) binding site. Lys14 contacts ATP. Residue Arg91 participates in substrate binding. Residue Asp148 is the Proton donor/acceptor of the active site. ATP contacts are provided by residues 208-212 and 283-285; these read HLGNG and DFR. A Mg(2+)-binding site is contributed by Glu384.

This sequence belongs to the acetokinase family. As to quaternary structure, homodimer. Mg(2+) serves as cofactor. Mn(2+) is required as a cofactor.

The protein localises to the cytoplasm. It catalyses the reaction acetate + ATP = acetyl phosphate + ADP. The protein operates within metabolic intermediate biosynthesis; acetyl-CoA biosynthesis; acetyl-CoA from acetate: step 1/2. Its function is as follows. Catalyzes the formation of acetyl phosphate from acetate and ATP. Can also catalyze the reverse reaction. The chain is Acetate kinase from Dictyoglomus turgidum (strain DSM 6724 / Z-1310).